We begin with the raw amino-acid sequence, 356 residues long: Biotin synthase (356 aa).

The region spanning 51 to 270 (NKVQCNQLLN…IALARIMMPL (220 aa)) is the Radical SAM core domain. [4Fe-4S] cluster contacts are provided by C66, C70, and C73. [2Fe-2S] cluster is bound by residues C110, C141, C201, and R274. The tract at residues 310 to 356 (PGDNKDRSLFDRLGLEPRDDHGVHEHSSHSHTHDQGHDHGPHGHSHG) is disordered. Basic and acidic residues predominate over residues 312–350 (DNKDRSLFDRLGLEPRDDHGVHEHSSHSHTHDQGHDHGP).

It belongs to the radical SAM superfamily. Biotin synthase family. In terms of assembly, homodimer. The cofactor is [4Fe-4S] cluster. [2Fe-2S] cluster is required as a cofactor.

The catalysed reaction is (4R,5S)-dethiobiotin + (sulfur carrier)-SH + 2 reduced [2Fe-2S]-[ferredoxin] + 2 S-adenosyl-L-methionine = (sulfur carrier)-H + biotin + 2 5'-deoxyadenosine + 2 L-methionine + 2 oxidized [2Fe-2S]-[ferredoxin]. It participates in cofactor biosynthesis; biotin biosynthesis; biotin from 7,8-diaminononanoate: step 2/2. Its function is as follows. Catalyzes the conversion of dethiobiotin (DTB) to biotin by the insertion of a sulfur atom into dethiobiotin via a radical-based mechanism. In Rhodopseudomonas palustris (strain BisB18), this protein is Biotin synthase.